We begin with the raw amino-acid sequence, 138 residues long: Acidic phospholipase A2 Ts-A6 (138 aa).

Positions 1–16 (MRALWIMAVLLLGVEG) are cleaved as a signal peptide. 7 cysteine pairs are disulfide-bonded: Cys-42-Cys-131, Cys-44-Cys-60, Cys-59-Cys-111, Cys-65-Cys-138, Cys-66-Cys-104, Cys-73-Cys-97, and Cys-91-Cys-102. Residues Tyr-43, Gly-45, and Gly-47 each contribute to the Ca(2+) site. Residue His-63 is part of the active site. Asp-64 is a Ca(2+) binding site. Asp-105 is an active-site residue.

The cofactor is Ca(2+). Expressed by the venom gland.

Its subcellular location is the secreted. The catalysed reaction is a 1,2-diacyl-sn-glycero-3-phosphocholine + H2O = a 1-acyl-sn-glycero-3-phosphocholine + a fatty acid + H(+). Snake venom phospholipase A2 (PLA2) that shows a moderate inhibition of ADP-induced human platelet aggregation when tested on platelet rich plasma. Exhibits high hydrolytic activities and prefers the anionic micelles (dPPC with deoxycholate) to the zwitterionic micelles (dPPC with Triton X-100). PLA2 catalyzes the calcium-dependent hydrolysis of the 2-acyl groups in 3-sn-phosphoglycerides. In Trimeresurus stejnegeri (Chinese green tree viper), this protein is Acidic phospholipase A2 Ts-A6.